A 242-amino-acid chain; its full sequence is Stress response regulator protein 1 (242 aa).

Positions 118 to 236 (NFLLVDDNFI…FDHIITCIEK (119 aa)) constitute a Response regulatory domain. Residue aspartate 169 is modified to 4-aspartylphosphate.

Functionally, required for stress adaptation, morphogenesis and virulence. The sequence is that of Stress response regulator protein 1 (SRR1) from Debaryomyces hansenii (strain ATCC 36239 / CBS 767 / BCRC 21394 / JCM 1990 / NBRC 0083 / IGC 2968) (Yeast).